A 388-amino-acid polypeptide reads, in one-letter code: Probable RNA-binding protein sce3 (388 aa).

Residues 18–84 (ESFGSTNWAD…GGMGSGYQRD (67 aa)) are disordered. Polar residues predominate over residues 38–50 (DRTTSTYRATPSS). A phosphoserine mark is found at Ser-49, Ser-50, and Ser-60. Thr-61 is modified (phosphothreonine). Residues Ser-64, Ser-67, and Ser-71 each carry the phosphoserine modification. Residues 94–169 (FTAHVGNLSF…RPVRITVAEP (76 aa)) enclose the RRM domain. Over residues 171–185 (RSFAREERSTGDWVR) the composition is skewed to basic and acidic residues. The interval 171-388 (RSFAREERST…WTKIGKGRKH (218 aa)) is disordered. A Phosphoserine modification is found at Ser-197. Basic and acidic residues predominate over residues 208–229 (RFRDPARDPSDRVREEPREWVR). Polar residues predominate over residues 248–257 (PRSSSNVNTE). A phosphoserine mark is found at Ser-250, Ser-251, and Ser-252. A compositionally biased stretch (low complexity) spans 258-268 (ATPSATTTTSS). Residues 289–349 (RVEEKLAKRT…LGDGEKKSSE (61 aa)) are compositionally biased toward basic and acidic residues. The residue at position 347 (Ser-347) is a Phosphoserine.

The protein localises to the cytoplasm. The protein is Probable RNA-binding protein sce3 (sce3) of Schizosaccharomyces pombe (strain 972 / ATCC 24843) (Fission yeast).